A 494-amino-acid chain; its full sequence is Probable cytochrome P450 515A1 (494 aa).

Residues 1–21 traverse the membrane as a helical segment; that stretch reads MILGIILGLFIYIYLINIKFF. C440 contacts heme.

Belongs to the cytochrome P450 family. The cofactor is heme.

It localises to the membrane. The polypeptide is Probable cytochrome P450 515A1 (cyp515A1) (Dictyostelium discoideum (Social amoeba)).